The chain runs to 665 residues: Protein-arginine deiminase type-2 (665 aa).

Ca(2+) is bound by residues aspartate 123, aspartate 125, aspartate 127, glutamate 131, asparagine 154, aspartate 156, aspartate 158, aspartate 166, aspartate 169, lysine 171, aspartate 177, aspartate 180, glutamate 354, aspartate 389, phenylalanine 408, leucine 411, and glutamate 412. The active-site Nucleophile is cysteine 647.

It belongs to the protein arginine deiminase family. Homodimer. The cofactor is Ca(2+). Spinal cord, submaxillary gland, cerebrum, cerebellum, and skeletal muscle.

The protein localises to the cytoplasm. The enzyme catalyses L-arginyl-[protein] + H2O = L-citrullyl-[protein] + NH4(+). Its function is as follows. Catalyzes the deimination of arginine residues of proteins. The chain is Protein-arginine deiminase type-2 (Padi2) from Rattus norvegicus (Rat).